The sequence spans 1191 residues: MYIKQVIIQGFRSYRDQTIVDPFSSKHNVIVGRNGSGKSNFFYAIQFVLSDEFSHLRPEQRLALLHEGTGPRVISAFVEIIFDNSDNRLPIDKEEVSLRRVIGAKKDQYFLDKKMVTKNDVMNLLESAGFSRSNPYYIVKQGKINQMATAPDSQRLKLLREVAGTRVYDERKEESISLMKETEGKREKINELLKYIEERLHTLEEEKEELAQYQKWDKMRRALEYTIYNQELNETRAKLDELSAKRETSGEKSRQLRDAQQDARDKMEDIERQVRELKTKISAMKEEKEQLSAERQEQIKQRTKLELKAKDLQDELAGNSEQRKRLLKERQKLLEKIEEKQKELAETEPKFNSVKEKEERGIARLAQATQERTDLYAKQGRGSQFTSKEERDKWIKKELKSLDQAINDKKRQIAAIHKDLEDTEANKEKNLEQYNKLDQDLNEVKARVEELDRKYYEVKNKKDELQSERNYLWREENAEQQALAAKREDLEKKQQLLRAATGKAILNGIDSINKVLDHFRRKGINQHVQNGYHGIVMNNFECEPAFYTCVEVTAGNRLFYHIVDSDEVSTKILMEFNKMNLPGEVTFLPLNKLDVRDTAYPETNDAIPMISKLRYNPRFDKAFKHVFGKTLICRSMEVSTQLARAFTMDCITLEGDQVSHRGALTGGYYDTRKSRLELQKDVRKAEEELGELEAKLNENLRRNIERINNEIDQLMNQMQQIETQQRKFKASRDSTLSEMKMLKEKRQQSEKTFMPKQRSLQSLEASLHAMESTRESLKAELGTDLPSQLSLEDQKRVDALNDEIRQLQQKNRQLLNERIKLEGIITRVETYLNENLRKRLDQVEQELNELRETEGGTVLTATTSQLEAINKRVKDTMARSEDLDNSIDKTEAGIKELQKSMERWKNMEKEHMDAINHDTKELEKMTNRQGMLLKKKEECMKKIRELGSLPQEAFEKYQTLSLKQLFRKLEQCNTELKKYSHVNKKALDQFVNFSEQKEKLIKRQEELDRGYKSIMELMNVLELRKYEAIQLTFKQVSKNFSEVFQKLVPGAKATLVMKKGDVEGSQSQDEGEGSGESERGSGSQSSVPSVDQFTGVGIRVSFTGKQGEMREMQQLSGGQKSLVALALIFAIQKCDPAPFYLFDEIDQALDAQHRKAVSDMIMELAVHAQFITTTFRPELLESADKSSGKSE.

32 to 39 (GRNGSGKS) serves as a coordination point for ATP. 3 positions are modified to N6-acetyllysine: lysine 105, lysine 106, and lysine 140. Coiled coils occupy residues 173–357 (EESI…VKEK) and 389–504 (EERD…TGKA). A disordered region spans residues 242–268 (LSAKRETSGEKSRQLRDAQQDARDKME). An SMC hinge domain is found at 530 to 642 (NGYHGIVMNN…CRSMEVSTQL (113 aa)). Residues 668–1022 (YYDTRKSRLE…SIMELMNVLE (355 aa)) adopt a coiled-coil conformation. At threonine 783 the chain carries Phosphothreonine. 7 positions are modified to phosphoserine: serine 787, serine 886, serine 1013, serine 1065, serine 1067, serine 1074, and serine 1083. The interval 1059-1090 (KGDVEGSQSQDEGEGSGESERGSGSQSSVPSV) is disordered.

The protein belongs to the SMC family. SMC3 subfamily. Forms a heterodimer with SMC1A or SMC1B in cohesin complexes. Cohesin complexes are composed of the SMC1 (SMC1A or meiosis-specific SMC1B) and SMC3 heterodimer attached via their SMC hinge domain, RAD21 which link them, and one STAG protein (STAG1, STAG2 or STAG3), which interacts with RAD21. Also found in meiosis-specific cohesin complexes. Found in a complex with SMC1A, CDCA5 and RAD21, PDS5A/SCC-112 and PDS5B/APRIN. Interacts with MXI1, MXD3 and MXD4. Interacts with NUMA1, and forms a ternary complex with KIF3B and KIFAP3, suggesting a function in tethering the chromosomes to the spindle pole and a function in chromosome movement. Interacts with PDS5A and WAPL; regulated by SMC3 acetylation. Interacts (via SMC hinge domain) with KIAA1328 (via N- and C-terminal domains). Interacts with DDX11, RPGR and STAG3. The cohesin complex interacts with the cohesin loading complex subunits NIPBL/Scc2 (via HEAT repeats) and MAU2/Scc4. NIPBL directly contacts all members of the complex, RAD21, SMC1A/B, SMC3 and STAG1. Interacts with SYCP2. Interacts with the NuRD complex component HDAC2; the interaction is direct. In terms of processing, phosphorylated at Ser-1083 in a SPO11-dependent manner. Acetylation at Lys-105 and Lys-106 by ESCO1 is important for genome stability and S phase sister chromatid cohesion. Regulated by DSCC1, it is required for processive DNA synthesis, coupling sister chromatid cohesion establishment during S phase to DNA replication. Deacetylation by HDAC8, regulates release of the cohesin complex from chromatin. Post-translationally, ubiquitinated by the DCX(DCAF15) complex, leading to its degradation. As to expression, ubiquitous.

Its subcellular location is the nucleus. It localises to the chromosome. The protein resides in the centromere. In terms of biological role, central component of cohesin, a complex required for chromosome cohesion during the cell cycle. The cohesin complex may form a large proteinaceous ring within which sister chromatids can be trapped. At anaphase, the complex is cleaved and dissociates from chromatin, allowing sister chromatids to segregate. Cohesion is coupled to DNA replication and is involved in DNA repair. The cohesin complex also plays an important role in spindle pole assembly during mitosis and in chromosomes movement. This is Structural maintenance of chromosomes protein 3 (Smc3) from Rattus norvegicus (Rat).